We begin with the raw amino-acid sequence, 228 residues long: Max-interacting protein 1 (228 aa).

Disordered stretches follow at residues 29 to 76 (GYAS…NELE) and 161 to 228 (IGST…SFTS). Residues 43 to 56 (QHSKPPRRLSRAQK) are compositionally biased toward basic residues. Polar residues predominate over residues 57–70 (HSSGSSNTSTANRS). A bHLH domain is found at 67–119 (ANRSTHNELEKNRRAHLRLCLERLKVLIPLGPDCTRHTTLGLLNKAKAHIKKL). The segment covering 173-183 (EREEIEVDVES) has biased composition (acidic residues). Over residues 216–228 (GYSSASVKLSFTS) the composition is skewed to polar residues.

Interacts with SMC3. Efficient DNA binding requires dimerization with another bHLH protein. Binds DNA as a heterodimer with MAX. Interacts with RNF17. High levels found in the brain, heart and lung while lower levels are seen in the liver, kidney and skeletal muscle.

The protein resides in the nucleus. Transcriptional repressor. MXI1 binds with MAX to form a sequence-specific DNA-binding protein complex which recognizes the core sequence 5'-CAC[GA]TG-3'. MXI1 thus antagonizes MYC transcriptional activity by competing for MAX. This Homo sapiens (Human) protein is Max-interacting protein 1 (MXI1).